We begin with the raw amino-acid sequence, 399 residues long: S-adenosylmethionine synthase (399 aa).

Histidine 15 is a binding site for ATP. Residue aspartate 17 coordinates Mg(2+). Residue glutamate 43 coordinates K(+). Residues glutamate 56 and glutamine 99 each contribute to the L-methionine site. Residues glutamine 99–asparagine 109 are flexible loop. Residues aspartate 174–lysine 176, arginine 244–phenylalanine 245, aspartate 253, arginine 259–lysine 260, alanine 276, and lysine 280 contribute to the ATP site. Position 253 (aspartate 253) interacts with L-methionine. An L-methionine-binding site is contributed by lysine 284.

Belongs to the AdoMet synthase family. Homotetramer; dimer of dimers. The cofactor is Mg(2+). K(+) serves as cofactor.

The protein localises to the cytoplasm. It catalyses the reaction L-methionine + ATP + H2O = S-adenosyl-L-methionine + phosphate + diphosphate. Its pathway is amino-acid biosynthesis; S-adenosyl-L-methionine biosynthesis; S-adenosyl-L-methionine from L-methionine: step 1/1. In terms of biological role, catalyzes the formation of S-adenosylmethionine (AdoMet) from methionine and ATP. The overall synthetic reaction is composed of two sequential steps, AdoMet formation and the subsequent tripolyphosphate hydrolysis which occurs prior to release of AdoMet from the enzyme. The chain is S-adenosylmethionine synthase from Salinispora tropica (strain ATCC BAA-916 / DSM 44818 / JCM 13857 / NBRC 105044 / CNB-440).